The chain runs to 660 residues: Bifunctional polymyxin resistance protein ArnA (660 aa).

Residues 1-304 (MKAVIFAYHD…TLGLVAGARL (304 aa)) are formyltransferase ArnAFT. His104 serves as the catalytic Proton donor; for formyltransferase activity. (6R)-10-formyltetrahydrofolate is bound by residues Arg114 and 136-140 (VKRAD). Residues 314–660 (RRIRVLILGV…RSVDVAERAS (347 aa)) form a dehydrogenase ArnADH region. NAD(+)-binding positions include Asp347 and 368–369 (DI). UDP-alpha-D-glucuronate-binding positions include Ala393, Tyr398, and 432 to 433 (TS). The active-site Proton acceptor; for decarboxylase activity is Glu434. UDP-alpha-D-glucuronate-binding positions include Arg460, Asn492, 526 to 535 (KLIDGGQQKR), and Tyr613. The active-site Proton donor; for decarboxylase activity is the Arg619.

It in the N-terminal section; belongs to the Fmt family. UDP-L-Ara4N formyltransferase subfamily. This sequence in the C-terminal section; belongs to the NAD(P)-dependent epimerase/dehydratase family. UDP-glucuronic acid decarboxylase subfamily. As to quaternary structure, homohexamer, formed by a dimer of trimers.

The enzyme catalyses UDP-alpha-D-glucuronate + NAD(+) = UDP-beta-L-threo-pentopyranos-4-ulose + CO2 + NADH. The catalysed reaction is UDP-4-amino-4-deoxy-beta-L-arabinose + (6R)-10-formyltetrahydrofolate = UDP-4-deoxy-4-formamido-beta-L-arabinose + (6S)-5,6,7,8-tetrahydrofolate + H(+). The protein operates within nucleotide-sugar biosynthesis; UDP-4-deoxy-4-formamido-beta-L-arabinose biosynthesis; UDP-4-deoxy-4-formamido-beta-L-arabinose from UDP-alpha-D-glucuronate: step 1/3. Its pathway is nucleotide-sugar biosynthesis; UDP-4-deoxy-4-formamido-beta-L-arabinose biosynthesis; UDP-4-deoxy-4-formamido-beta-L-arabinose from UDP-alpha-D-glucuronate: step 3/3. It participates in bacterial outer membrane biogenesis; lipopolysaccharide biosynthesis. In terms of biological role, bifunctional enzyme that catalyzes the oxidative decarboxylation of UDP-glucuronic acid (UDP-GlcUA) to UDP-4-keto-arabinose (UDP-Ara4O) and the addition of a formyl group to UDP-4-amino-4-deoxy-L-arabinose (UDP-L-Ara4N) to form UDP-L-4-formamido-arabinose (UDP-L-Ara4FN). The modified arabinose is attached to lipid A and is required for resistance to polymyxin and cationic antimicrobial peptides. The protein is Bifunctional polymyxin resistance protein ArnA of Salmonella heidelberg (strain SL476).